Reading from the N-terminus, the 379-residue chain is tRNA-specific 2-thiouridylase MnmA (379 aa).

ATP is bound by residues 23–30 (AMSGGVDS) and L49. The active-site Nucleophile is C117. The cysteines at positions 117 and 214 are disulfide-linked. G141 lines the ATP pocket. The interaction with tRNA stretch occupies residues 163-165 (RDQ). C214 (cysteine persulfide intermediate) is an active-site residue.

This sequence belongs to the MnmA/TRMU family.

The protein resides in the cytoplasm. The catalysed reaction is S-sulfanyl-L-cysteinyl-[protein] + uridine(34) in tRNA + AH2 + ATP = 2-thiouridine(34) in tRNA + L-cysteinyl-[protein] + A + AMP + diphosphate + H(+). Functionally, catalyzes the 2-thiolation of uridine at the wobble position (U34) of tRNA, leading to the formation of s(2)U34. In Cereibacter sphaeroides (strain ATCC 17029 / ATH 2.4.9) (Rhodobacter sphaeroides), this protein is tRNA-specific 2-thiouridylase MnmA.